A 365-amino-acid chain; its full sequence is uncharacterized protein (365 aa).

Disordered regions lie at residues 218–262 (QRPS…AEAA) and 315–342 (PRLP…RTPC). 2 stretches are compositionally biased toward basic and acidic residues: residues 239–257 (PDNR…KDPE) and 331–341 (MEFRNLSDRTP).

This is an uncharacterized protein from Mus musculus (Mouse).